A 215-amino-acid chain; its full sequence is Cytochrome c biogenesis ATP-binding export protein CcmA (215 aa).

One can recognise an ABC transporter domain in the interval 3–215 (LEAENLAGER…MAAFSVEDIA (213 aa)). 35 to 42 (GPNGSGKS) serves as a coordination point for ATP.

Belongs to the ABC transporter superfamily. CcmA exporter (TC 3.A.1.107) family. As to quaternary structure, the complex is composed of two ATP-binding proteins (CcmA) and two transmembrane proteins (CcmB).

Its subcellular location is the cell inner membrane. The catalysed reaction is heme b(in) + ATP + H2O = heme b(out) + ADP + phosphate + H(+). Its function is as follows. Part of the ABC transporter complex CcmAB involved in the biogenesis of c-type cytochromes; once thought to export heme, this seems not to be the case, but its exact role is uncertain. Responsible for energy coupling to the transport system. In Brucella melitensis biotype 1 (strain ATCC 23456 / CCUG 17765 / NCTC 10094 / 16M), this protein is Cytochrome c biogenesis ATP-binding export protein CcmA.